Consider the following 864-residue polypeptide: Leucine--tRNA ligase (864 aa).

A 'HIGH' region motif is present at residues 42-52 (PYPSGKLHMGH). A 'KMSKS' region motif is present at residues 624-628 (KMSKS). Position 627 (Lys-627) interacts with ATP.

It belongs to the class-I aminoacyl-tRNA synthetase family.

The protein localises to the cytoplasm. The catalysed reaction is tRNA(Leu) + L-leucine + ATP = L-leucyl-tRNA(Leu) + AMP + diphosphate. The sequence is that of Leucine--tRNA ligase from Paraburkholderia phymatum (strain DSM 17167 / CIP 108236 / LMG 21445 / STM815) (Burkholderia phymatum).